Here is a 167-residue protein sequence, read N- to C-terminus: Insertion element IS1 2 protein InsB (167 aa).

Belongs to the transposase 27 family.

Absolutely required for transposition of IS1. The polypeptide is Insertion element IS1 2 protein InsB (insB2) (Escherichia coli (strain K12)).